The chain runs to 374 residues: 4-hydroxy-3-methylbut-2-en-1-yl diphosphate synthase (flavodoxin) (374 aa).

Residues cysteine 270, cysteine 273, cysteine 305, and glutamate 312 each contribute to the [4Fe-4S] cluster site.

The protein belongs to the IspG family. [4Fe-4S] cluster is required as a cofactor.

It catalyses the reaction (2E)-4-hydroxy-3-methylbut-2-enyl diphosphate + oxidized [flavodoxin] + H2O + 2 H(+) = 2-C-methyl-D-erythritol 2,4-cyclic diphosphate + reduced [flavodoxin]. It functions in the pathway isoprenoid biosynthesis; isopentenyl diphosphate biosynthesis via DXP pathway; isopentenyl diphosphate from 1-deoxy-D-xylulose 5-phosphate: step 5/6. In terms of biological role, converts 2C-methyl-D-erythritol 2,4-cyclodiphosphate (ME-2,4cPP) into 1-hydroxy-2-methyl-2-(E)-butenyl 4-diphosphate. The polypeptide is 4-hydroxy-3-methylbut-2-en-1-yl diphosphate synthase (flavodoxin) (Yersinia enterocolitica serotype O:8 / biotype 1B (strain NCTC 13174 / 8081)).